An 84-amino-acid chain; its full sequence is MSDDERVTKPFKFVTGVDARFPNVNQTKHCWQNYVDYHKCILAKGEDFAPCRQFWLAYRSLCPSGWYQRWDEQREAGNFPVKLE.

The CHCH domain maps to 27-70 (TKHCWQNYVDYHKCILAKGEDFAPCRQFWLAYRSLCPSGWYQRW). The Cx9C motif signature appears at 30 to 40 (CWQNYVDYHKC). 2 disulfides stabilise this stretch: Cys-30–Cys-62 and Cys-40–Cys-51. Positions 51 to 62 (CRQFWLAYRSLC) match the Cx10C motif motif.

The protein belongs to the cytochrome c oxidase subunit 6B family. As to quaternary structure, component of the cytochrome c oxidase (complex IV, CIV), a multisubunit enzyme composed of 11 subunits. The complex is composed of a catalytic core of 3 subunits Cox1, Cox2 and Cox3, encoded in the mitochondrial DNA, and 8 supernumerary subunits Cox4, Cox5a/Cox5, Cox6, Cox7, Cox8, Cox7a/Cox9, Cox6b/Cox12 and Cox6a/Cox13, which are encoded in the nuclear genome. The complex exists as a monomer or a dimer and forms respiratory supercomplexes (SCs) in the inner mitochondrial membrane with NADH-ubiquinone oxidoreductase (complex I, CI) and ubiquinol-cytochrome c oxidoreductase (cytochrome b-c1 complex, complex III, CIII), resulting in various different assemblies (supercomplexes I(1)IV(1), I(1)III(3)IV(2), III(2)IV(1) and III(2)IV(2) as well as larger supercomplexes of compositions like I(1)III(2)IV(5-6)).

It is found in the mitochondrion inner membrane. It functions in the pathway energy metabolism; oxidative phosphorylation. Functionally, component of the cytochrome c oxidase, the last enzyme in the mitochondrial electron transport chain which drives oxidative phosphorylation. The respiratory chain contains 3 multisubunit complexes succinate dehydrogenase (complex II, CII), ubiquinol-cytochrome c oxidoreductase (cytochrome b-c1 complex, complex III, CIII) and cytochrome c oxidase (complex IV, CIV), that cooperate to transfer electrons derived from NADH and succinate to molecular oxygen, creating an electrochemical gradient over the inner membrane that drives transmembrane transport and the ATP synthase. Cytochrome c oxidase is the component of the respiratory chain that catalyzes the reduction of oxygen to water. Electrons originating from reduced cytochrome c in the intermembrane space (IMS) are transferred via the dinuclear copper A center (CU(A)) of Cox2 and heme A of Cox1 to the active site in Cox1, a binuclear center (BNC) formed by heme A3 and copper B (CU(B)). The BNC reduces molecular oxygen to 2 water molecules using 4 electrons from cytochrome c in the IMS and 4 protons from the mitochondrial matrix. This chain is Cytochrome c oxidase subunit 12, mitochondrial (cox-13), found in Neurospora crassa (strain ATCC 24698 / 74-OR23-1A / CBS 708.71 / DSM 1257 / FGSC 987).